Reading from the N-terminus, the 243-residue chain is F-box protein pof15 (243 aa).

The F-box domain occupies Gln-28–Leu-73.

The protein operates within protein modification; protein ubiquitination. Probable substrate recognition component of a SCF (SKP1-CUL1-F-box protein) E3 ubiquitin-protein ligase complex that mediates the ubiquitination and subsequent proteasomal degradation of target proteins. The protein is F-box protein pof15 (pof15) of Schizosaccharomyces pombe (strain 972 / ATCC 24843) (Fission yeast).